Consider the following 165-residue polypeptide: Lipoprotein signal peptidase (165 aa).

Helical transmembrane passes span 9 to 29 (SFLW…YFVV), 65 to 85 (WQKY…CYFL), and 100 to 120 (ALII…GFVV). Residues D121 and D139 contribute to the active site. A helical membrane pass occupies residues 134–154 (VFNVADIAISLGAGLMILDAF).

It belongs to the peptidase A8 family.

The protein resides in the cell inner membrane. The catalysed reaction is Release of signal peptides from bacterial membrane prolipoproteins. Hydrolyzes -Xaa-Yaa-Zaa-|-(S,diacylglyceryl)Cys-, in which Xaa is hydrophobic (preferably Leu), and Yaa (Ala or Ser) and Zaa (Gly or Ala) have small, neutral side chains.. It functions in the pathway protein modification; lipoprotein biosynthesis (signal peptide cleavage). This protein specifically catalyzes the removal of signal peptides from prolipoproteins. The protein is Lipoprotein signal peptidase of Pasteurella multocida (strain Pm70).